The sequence spans 283 residues: tRNA pseudouridine synthase A (283 aa).

The active-site Nucleophile is Asp73. Residues 120–124 (FHARF) are RNA binding. Tyr131 contacts substrate. The segment at 181–185 (QCQSR) is interaction with tRNA.

Belongs to the tRNA pseudouridine synthase TruA family. Homodimer.

The catalysed reaction is uridine(38/39/40) in tRNA = pseudouridine(38/39/40) in tRNA. Its function is as follows. Formation of pseudouridine at positions 38, 39 and 40 in the anticodon stem and loop of transfer RNAs. The polypeptide is tRNA pseudouridine synthase A (Pectobacterium atrosepticum (strain SCRI 1043 / ATCC BAA-672) (Erwinia carotovora subsp. atroseptica)).